Consider the following 504-residue polypeptide: Cytochrome P450 monooxygenase gliF (504 aa).

Residues 13-31 traverse the membrane as a helical segment; that stretch reads AVAVSFGVGLLYWVYRLLL. Asn197 and Asn299 each carry an N-linked (GlcNAc...) asparagine glycan. Residue Cys449 participates in heme binding.

Belongs to the cytochrome P450 family. The cofactor is heme.

The protein localises to the membrane. Its pathway is mycotoxin biosynthesis. In terms of biological role, cytochrome P450 monooxygenase; part of the gene cluster that mediates the biosynthesis of gliotoxin, a member of the epipolythiodioxopiperazine (ETP) class of toxins characterized by a disulfide bridged cyclic dipeptide. The first step in gliotoxin biosynthesis is the condensation of serine and phenylalanine to form the cyclo-L-phenylalanyl-L-serine diketopiperazine (DKP) by the NRPS gliP. GliP is also able to produce the DKP cyclo-L-tryptophanyl-L-serine, suggesting that the substrate specificity of the first adenylation (A) domain in gliP is sufficiently relaxed to accommodate both L-Phe and L-Trp. The cytochrome P450 monooxygenase gliC has been shown to catalyze the subsequent hydroxylation of the alpha-carbon of L-Phe in cyclo-L-phenylalanyl-L-serine whereas the second cytochrome P450 enzyme, gliF, is presumably involved in the modification of the DKP side chain. The glutathione S-transferase (GST) gliG then forms a bis-glutathionylated biosynthetic intermediate which is responsible for the sulfurization of gliotoxin. This bis-glutathionylated intermediate is subsequently processed by the gamma-glutamyl cyclotransferase gliK to remove both gamma-glutamyl moieties. Subsequent processing via gliI yields a biosynthetic intermediate, which is N-methylated via the N-methyltransferase gliN, before the gliotoxin oxidoreductase gliT-mediated disulfide bridge closure. GliN-mediated amide methylation confers stability to ETP, damping the spontaneous formation of tri- and tetrasulfides. Intracellular dithiol gliotoxin oxidized by gliT is subsequently effluxed by gliA. Gliotoxin contributes to pathogenesis during invasive aspergillosis. In macrophages and neutrophils, gliotoxin showed inhibition of various different cell functions including cytokine production, antigen presentation, phagocytosis, and production of reactive oxygen species. The polypeptide is Cytochrome P450 monooxygenase gliF (Aspergillus fumigatus (strain ATCC MYA-4609 / CBS 101355 / FGSC A1100 / Af293) (Neosartorya fumigata)).